Consider the following 162-residue polypeptide: UPF0262 protein Pden_1958 (162 aa).

Residues 1–22 form a disordered region; sequence MSQSANRLCRIDIDDSALPPPS.

This sequence belongs to the UPF0262 family.

In Paracoccus denitrificans (strain Pd 1222), this protein is UPF0262 protein Pden_1958.